The following is a 296-amino-acid chain: NAD kinase (296 aa).

The active-site Proton acceptor is aspartate 72. Residues 72 to 73, 146 to 147, arginine 157, lysine 174, aspartate 176, 187 to 192, and glutamine 247 contribute to the NAD(+) site; these read DG, ND, and TAYALS.

This sequence belongs to the NAD kinase family. It depends on a divalent metal cation as a cofactor.

The protein localises to the cytoplasm. The catalysed reaction is NAD(+) + ATP = ADP + NADP(+) + H(+). In terms of biological role, involved in the regulation of the intracellular balance of NAD and NADP, and is a key enzyme in the biosynthesis of NADP. Catalyzes specifically the phosphorylation on 2'-hydroxyl of the adenosine moiety of NAD to yield NADP. This Pseudomonas putida (strain ATCC 700007 / DSM 6899 / JCM 31910 / BCRC 17059 / LMG 24140 / F1) protein is NAD kinase.